The chain runs to 24 residues: Large ribosomal subunit protein uL30 (24 aa).

Belongs to the universal ribosomal protein uL30 family. As to quaternary structure, part of the 50S ribosomal subunit.

In Ectopseudomonas mendocina (Pseudomonas mendocina), this protein is Large ribosomal subunit protein uL30 (rpmD).